A 170-amino-acid chain; its full sequence is Cathelicidin antimicrobial peptide (170 aa).

Residues 1–30 form the signal peptide; the sequence is MKTQRDSPSLGRWSLVLLLLGLVMPLAIVA. Residues 31 to 131 constitute a propeptide, cathelin-like domain (CLD); that stretch reads QVLSYQEAVL…DISCDKDNRR (101 aa). Disulfide bonds link Cys86–Cys97 and Cys108–Cys125. The tract at residues 150 to 162 is active core; sequence LKKVGQKIKDFLG.

This sequence belongs to the cathelicidin family. As to quaternary structure, monomer, homodimer or homotrimer (in vitro). Oligomerizes as tetra- or hexamer in solution (in vitro). In terms of processing, proteolytically cleaved by proteinase PRTN3 into antibacterial peptide LL-37. Proteolytically cleaved by cathepsin CTSG and neutrophil elastase ELANE. Resistant to proteolytic degradation in solution, and when bound to both zwitterionic (mimicking mammalian membranes) and negatively charged membranes (mimicking bacterial membranes). Post-translationally, after secretion onto the skin surface, the CAMP gene product is processed by a serine protease-dependent mechanism into multiple novel antimicrobial peptides distinct from and shorter than cathelicidin LL-37. These peptides show enhanced antimicrobial action, acquiring the ability to kill skin pathogens such as S.aureus, E.coli and C.albicans. These peptides have lost the ability to stimulate CXCL8/IL8 release from keratinocytes. The peptides act synergistically, killing bacteria at lower concentrations when present together, and maintain activity at increased salt condition.

Its subcellular location is the secreted. The protein localises to the vesicle. In terms of biological role, antimicrobial protein that is an integral component of the innate immune system. Binds to bacterial lipopolysaccharides (LPS). Acts via neutrophil N-formyl peptide receptors to enhance the release of CXCL2. Postsecretory processing generates multiple cathelicidin antimicrobial peptides with various lengths which act as a topical antimicrobial defense in sweat on skin. The unprocessed precursor form, cathelicidin antimicrobial peptide, inhibits the growth of Gram-negative E.coli and E.aerogenes with efficiencies comparable to that of the mature peptide LL-37 (in vitro). Its function is as follows. Antimicrobial peptide that is an integral component of the innate immune system. Binds to bacterial lipopolysaccharides (LPS). Causes membrane permeabilization by forming transmembrane pores (in vitro). Causes lysis of E.coli. Exhibits antimicrobial activity against Gram-negative bacteria such as P.aeruginosa, S.typhimurium, E.aerogenes, E.coli and P.syringae, Gram-positive bacteria such as L.monocytogenes, S.epidermidis, S.pyogenes and S.aureus, as well as vancomycin-resistant enterococci (in vitro). Exhibits antimicrobial activity against methicillin-resistant S.aureus, P.mirabilis, and C.albicans in low-salt media, but not in media containing 100 mM NaCl (in vitro). Forms chiral supramolecular assemblies with quinolone signal (PQS) molecules of P.aeruginosa, which may lead to interference of bacterial quorum signaling and perturbance of bacterial biofilm formation. May form supramolecular fiber-like assemblies on bacterial membranes. Induces cytokine and chemokine producation as well as TNF/TNFA and CSF2/GMCSF production in normal human keratinocytes. Exhibits hemolytic activity against red blood cells. Functionally, exhibits antimicrobial activity against E.coli and B.megaterium (in vitro). This Macaca fascicularis (Crab-eating macaque) protein is Cathelicidin antimicrobial peptide.